Here is a 1335-residue protein sequence, read N- to C-terminus: Regulatory-associated protein of mTOR (1335 aa).

2 positions are modified to phosphoserine: Ser-44 and Ser-122. Ser-696 is subject to Phosphoserine; by MAPK8. Residue Thr-700 is glycosylated (O-linked (GlcNAc) threonine). Position 706 is a phosphothreonine; by MAPK8 (Thr-706). Phosphoserine; by RPS6KA1 is present on residues Ser-719 and Ser-721. At Ser-722 the chain carries Phosphoserine; by AMPK and RPS6KA1. Ser-738 carries the post-translational modification Phosphoserine. Ser-791 is modified (phosphoserine; by PKA). Phosphoserine; by AMPK is present on Ser-792. Ser-836 and Ser-855 each carry phosphoserine. The interval 850 to 943 (VLDTSSLTQS…PEQTADDADD (94 aa)) is disordered. Residues 851 to 866 (LDTSSLTQSAPASPTN) show a composition bias toward polar residues. Ser-859 bears the Phosphoserine; by MTOR mark. The residue at position 863 (Ser-863) is a Phosphoserine; by MAPK8, MTOR and NLK. Thr-865 carries the phosphothreonine modification. Positions 874-887 (AGGSPPASSTSSSS) are enriched in low complexity. Ser-877 bears the Phosphoserine; by TBK1 mark. Residues Lys-932 and Lys-948 each participate in a glycyl lysine isopeptide (Lys-Gly) (interchain with G-Cter in ubiquitin) cross-link. Ser-982 carries the post-translational modification Phosphoserine. WD repeat units follow at residues 1020–1061 (NRNP…DYFH), 1065–1106 (PRYT…EKNP), 1121–1160 (TTRG…KVQD), 1164–1203 (GADS…SECR), 1209–1249 (EHTA…SVNV), 1251–1291 (QIVK…NNIK), and 1299–1335 (QRVG…KRVR). Position 1097 is an N6-acetyllysine (Lys-1097).

The protein belongs to the WD repeat RAPTOR family. As to quaternary structure, part of the mechanistic target of rapamycin complex 1 (mTORC1) which contains MTOR, MLST8 and RPTOR. mTORC1 associates with AKT1S1/PRAS40, which inhibits its activity. mTORC1 associates with DEPTOR, which regulates its activity. mTORC1 binds to and is inhibited by FKBP12-rapamycin. Forms a complex with MTOR under both leucine-rich and -poor conditions. Interacts with (via TOS motifs) EIF4EBP1 and RPS6KB1; interaction is independent of its association with MTOR. Binds preferentially to poorly or non-phosphorylated forms of EIF4EBP1, and this binding is critical to the ability of MTOR to catalyze phosphorylation. Interacts with ULK1 in a nutrient-dependent manner; the interaction is reduced during starvation. Interacts with GTP-bound form of RagA/RRAGA or RagB/RRAGB and GDP-bound form of RagC/RRAGC or RagD/RRAGD, promoting recruitment of mTORC1 to the lysosomes. Interacts (when phosphorylated by AMPK) with 14-3-3 protein, leading to inhibition of its activity. Interacts with SPAG5; SPAG5 competes with MTOR for RPTOR-binding, resulting in decreased mTORC1 formation. Interacts with WAC; WAC positively regulates MTOR activity by promoting the assembly of the TTT complex composed of TELO2, TTI1 and TTI2 and the RUVBL complex composed of RUVBL1 and RUVBL2 into the TTT-RUVBL complex which leads to the dimerization of the mTORC1 complex and its subsequent activation. Interacts with G3BP1. The complex formed with G3BP1 and SPAG5 is increased by oxidative stress. Interacts with HTR6. Interacts with PIH1D1. Interacts with LARP1. Interacts with BRAT1. Interacts with SIK3. Interacts with SLC38A7; this interaction mediates the recruitment of mTORC1 to the lysosome and its subsequent activation. In terms of assembly, (Microbial infection) Interacts with vaccinia virus protein F17; this interaction dysregulates mTOR. In terms of processing, insulin-stimulated phosphorylation at Ser-863 by MTOR and MAPK8 regulates mTORC1 activity. Phosphorylated at Ser-863 by NLK in response to stress, disrupting the interaction with small GTPases Rag (RagA/RRAGA, RagB/RRAGB, RagC/RRAGC and/or RagD/RRAGD), thereby preventing lysosome recruitment and activation of the mTORC1 complex. Osmotic stress also induces phosphorylation at Ser-696, Thr-706 and Ser-863 by MAPK8. Ser-863 phosphorylation is required for phosphorylation at Ser-855 and Ser-859. In response to nutrient limitation, phosphorylated at Ser-722 and Ser-792 by AMPK; phosphorylation promotes interaction with 14-3-3 proteins, leading to negative regulation of the mTORC1 complex. Phosphorylation at Ser-722 and Ser-792 by AMPK in response to glucose starvation inhibits O-GlcNAcylation by OGT and subsequent activation of mTORC1. In response to growth factors, phosphorylated at Ser-719, Ser-721 and Ser-722 by RPS6KA1, which stimulates mTORC1 activity. Phosphorylation at Ser-791 by PKA downstream of cAMP inhibits the mTORC1 complex. Phosphorylated at Ser-877 by TBK1, leading to negative regulation of the mTORC1 complex. O-GlcNAcylated by OGT upon glucose sufficiency, promoting interaction with small GTPases Rag (RagA/RRAGA, RagB/RRAGB, RagC/RRAGC and/or RagD/RRAGD) and subsequent recruitment of mTORC1 to lysosomal membranes, leading to activation of the mTORC1 complex. Phosphorylation at Ser-722 and Ser-792 by AMPK in response to glucose starvation inhibits O-GlcNAcylation. Post-translationally, acetylation at Lys-1097 by EP300/p300 in response to leucine metabolite acetyl-coA promotes its activity, leading to activation of the mTORC1 complex. Acetylation is decreased in response to fasting. In terms of processing, ubiquitinated, leading to its degradation by the proteasome. Deubiquitinated by OTUB1 via a non-catalytic mechanism. Ubiquitinated by an E3 ubiquitin ligase complex containing VHL. In terms of tissue distribution, highly expressed in skeletal muscle, and in a lesser extent in brain, lung, small intestine, kidney and placenta. Widely expressed, with highest levels in nasal mucosa and pituitary and lowest in spleen.

The protein resides in the lysosome membrane. Its subcellular location is the cytoplasm. It is found in the cytoplasmic granule. In terms of biological role, component of the mechanistic target of rapamycin complex 1 (mTORC1), an evolutionarily conserved central nutrient sensor that stimulates anabolic reactions and macromolecule biosynthesis to promote cellular biomass generation and growth. In response to nutrients, growth factors or amino acids, mTORC1 is recruited to the lysosome membrane and promotes protein, lipid and nucleotide synthesis by phosphorylating several substrates, such as ribosomal protein S6 kinase (RPS6KB1 and RPS6KB2) and EIF4EBP1 (4E-BP1). In the same time, it inhibits catabolic pathways by phosphorylating the autophagy initiation components ULK1 and ATG13, as well as transcription factor TFEB, a master regulators of lysosomal biogenesis and autophagy. The mTORC1 complex is inhibited in response to starvation and amino acid depletion. Within the mTORC1 complex, RPTOR acts both as a molecular adapter, which (1) mediates recruitment of mTORC1 to lysosomal membranes via interaction with small GTPases Rag (RagA/RRAGA, RagB/RRAGB, RagC/RRAGC and/or RagD/RRAGD), and a (2) substrate-specific adapter, which promotes substrate specificity by binding to TOS motif-containing proteins and direct them towards the active site of the MTOR kinase domain for phosphorylation. mTORC1 complex regulates many cellular processes, such as odontoblast and osteoclast differentiation or neuronal transmission. mTORC1 complex in excitatory neuronal transmission is required for the prosocial behavior induced by the psychoactive substance lysergic acid diethylamide (LSD). This chain is Regulatory-associated protein of mTOR, found in Homo sapiens (Human).